A 141-amino-acid polypeptide reads, in one-letter code: Hemoglobin subunit alpha-A (141 aa).

A Globin domain is found at 1 to 141 (VLSGSDKTNV…VGNVLTAKYR (141 aa)). His-58 contacts O2. His-87 is a heme b binding site.

The protein belongs to the globin family. Heterotetramer of two alpha chains and two beta chains. In terms of tissue distribution, red blood cells.

Functionally, involved in oxygen transport from the lung to the various peripheral tissues. The chain is Hemoglobin subunit alpha-A (HBAA) from Vultur gryphus (Andean condor).